Reading from the N-terminus, the 252-residue chain is 2-succinyl-6-hydroxy-2,4-cyclohexadiene-1-carboxylate synthase (252 aa).

This sequence belongs to the AB hydrolase superfamily. MenH family. Monomer.

It carries out the reaction 5-enolpyruvoyl-6-hydroxy-2-succinyl-cyclohex-3-ene-1-carboxylate = (1R,6R)-6-hydroxy-2-succinyl-cyclohexa-2,4-diene-1-carboxylate + pyruvate. It functions in the pathway quinol/quinone metabolism; 1,4-dihydroxy-2-naphthoate biosynthesis; 1,4-dihydroxy-2-naphthoate from chorismate: step 3/7. Its pathway is quinol/quinone metabolism; menaquinone biosynthesis. Its function is as follows. Catalyzes a proton abstraction reaction that results in 2,5-elimination of pyruvate from 2-succinyl-5-enolpyruvyl-6-hydroxy-3-cyclohexene-1-carboxylate (SEPHCHC) and the formation of 2-succinyl-6-hydroxy-2,4-cyclohexadiene-1-carboxylate (SHCHC). The chain is 2-succinyl-6-hydroxy-2,4-cyclohexadiene-1-carboxylate synthase from Escherichia coli (strain SE11).